We begin with the raw amino-acid sequence, 741 residues long: Endoplasmic reticulum membrane sensor NFE2L1 (741 aa).

The helical; Signal-anchor for type II membrane protein transmembrane segment at 7 to 24 threads the bilayer; sequence YLTEGLLQFTILLSLIGV. Disordered stretches follow at residues 108 to 148 and 198 to 220; these read DPEG…TEQG and QKEQDVDKELQDGREREDTWSGE. Residues 113–131 show a composition bias toward polar residues; it reads VSGSQPNSGLALESSSGLQ. The interval 191-199 is cholesterol recognition/amino acid consensus (CRAC) region; sequence VFDYSHRQK. The segment covering 198–216 has biased composition (basic and acidic residues); that stretch reads QKEQDVDKELQDGREREDT. 2 N-linked (GlcNAc...) asparagine glycosylation sites follow: Asn-319 and Asn-331. Positions 350 to 354 are CPD; the sequence is SPEVE. N-linked (GlcNAc...) asparagine glycosylation is present at Asn-394. Disordered stretches follow at residues 441 to 501 and 551 to 582; these read EEEF…DSET and SALDSADLPPPSTLKKGSKEKQADFLDKQMSR. The Destruction motif signature appears at 447–451; the sequence is DSGLS. The span at 447-492 shows a compositional bias: low complexity; that stretch reads DSGLSLDSSHSPSSLSSSEGSSSSSSSSSSSSASSSASSSFSEEGA. The residue at position 497 (Ser-497) is a Phosphoserine; by CK2. A compositionally biased stretch (basic and acidic residues) spans 567–582; it reads GSKEKQADFLDKQMSR. Residue Ser-568 is modified to Phosphoserine. The region spanning 623–686 is the bZIP domain; it reads LIRDIRRRGK…RQMKQKVQSL (64 aa). Residues 625–644 form a basic motif region; the sequence is RDIRRRGKNKMAAQNCRKRK. The tract at residues 651 to 665 is leucine-zipper; that stretch reads LERDVEDLQRDKARL. The disordered stretch occupies residues 722–741; it reads RTMADQQARRQERKPKDRRK. Residues 730 to 737 carry the Nuclear localization signal motif; that stretch reads RRQERKPK. A compositionally biased stretch (basic residues) spans 732–741; the sequence is QERKPKDRRK.

Belongs to the bZIP family. CNC subfamily. Interacts with KEAP1. As to quaternary structure, interacts (via CPD region) with FBXW7; leading to its ubiquitination and degradation. Interacts with SYVN1/HRD1; leading to its ubiquitination and degradation. Interacts (when ubiquitinated) with DDI2; leading to its cleavage. In terms of assembly, interacts (via the bZIP domain) with small MAF protein (MAFF, MAFG or MAFK); required for binding to antioxidant response elements (AREs) on DNA. Interacts (via Destruction motif) with BTRC; leading to its ubiquitination and degradation. Interacts with CEBPB; the heterodimer represses expression of DSPP during odontoblast differentiation. Interacts with MOTS-c, a peptide produced by the mitochondrially encoded 12S rRNA MT-RNR1. In terms of processing, cleaved at Leu-104 by the aspartyl protease DDI2 following retrotranslocation, releasing the protein from the endoplasmic reticulum membrane and forming the transcription factor NRF1 that translocates into the nucleus. Ubiquitination is prerequisite for cleavage by aspartyl protease DDI2. Post-translationally, N-glycosylated in normal conditions, when it has a single-pass type II membrane protein topology, with the DNA-binding domain facing the endoplasmic reticulum lumen. Deglycosylated during retrotranslocation to the cytosolic side of the membrane, to have a single-pass type III membrane protein topology with the major part of the protein facing the cytosol. Ubiquitinated by the SCF(FBXW7) complex and SYVN1/HRD1, leading to its degradation by the proteasome. Ubiquitinated during retrotranslocation to the cytosolic side of the membrane: ubiquitination does not lead to degradation and is required for processing by the aspartyl protease DDI2 and subsequent release from the endoplasmic reticulum membrane. In terms of processing, phosphorylation by CK2 at Ser-497 inhibits transcription factor activity, possibly by affecting DNA-binding activity. Phosphorylation at Ser-568 is required for interaction with CEBPB. Post-translationally, ubiquitinated by the SCF(BTRC) complex in the nucleus, leading to its degradation by the proteasome. Isoform 1: Widely expressed including kidney, brown fat, white fat, large intestine, small intestine, stomach, lung, brain and liver. Isoform 1: Expressed in mouse embryonic fibroblasts (MEF). Isoform 2: Widely expressed including kidney, brown fat, white fat, large intestine, small intestine, stomach, lung, brain and liver. Isoform 2: levels in white fat, lung and liver are increased compared to isoform 1 (at protein level). Isoform 2: levels are elevated in brown fat and brain, but are reduced in liver compared to isoform 1 levels. Isoform 2: Expressed in mouse embryonic fibroblasts (MEF).

It is found in the endoplasmic reticulum membrane. It localises to the nucleus. The protein resides in the cytoplasm. Functionally, endoplasmic reticulum membrane sensor that translocates into the nucleus in response to various stresses to act as a transcription factor. Constitutes a precursor of the transcription factor NRF1. Able to detect various cellular stresses, such as cholesterol excess, oxidative stress or proteasome inhibition. In response to stress, it is released from the endoplasmic reticulum membrane following cleavage by the protease DDI2 and translocates into the nucleus to form the transcription factor NRF1. Acts as a key sensor of cholesterol excess: in excess cholesterol conditions, the endoplasmic reticulum membrane form of the protein directly binds cholesterol via its CRAC motif, preventing cleavage and release of the transcription factor NRF1, thereby allowing expression of genes promoting cholesterol removal, such as CD36. Involved in proteasome homeostasis: in response to proteasome inhibition, it is released from the endoplasmic reticulum membrane, translocates to the nucleus and activates expression of genes encoding proteasome subunits. Its function is as follows. CNC-type bZIP family transcription factor that translocates to the nucleus and regulates expression of target genes in response to various stresses. Heterodimerizes with small-Maf proteins (MAFF, MAFG or MAFK) and binds DNA motifs including the antioxidant response elements (AREs), which regulate expression of genes involved in oxidative stress response. Activates or represses expression of target genes, depending on the context. Plays a key role in cholesterol homeostasis by acting as a sensor of cholesterol excess: in low cholesterol conditions, translocates into the nucleus and represses expression of genes involved in defense against cholesterol excess, such as CD36. In excess cholesterol conditions, the endoplasmic reticulum membrane form of the protein directly binds cholesterol via its CRAC motif, preventing cleavage and release of the transcription factor NRF1, thereby allowing expression of genes promoting cholesterol removal. Critical for redox balance in response to oxidative stress: acts by binding the AREs motifs on promoters and mediating activation of oxidative stress response genes, such as GCLC, GCLM, GSS, MT1 and MT2. Plays an essential role during fetal liver hematopoiesis: probably has a protective function against oxidative stress and is involved in lipid homeostasis in the liver. Involved in proteasome homeostasis: in response to proteasome inhibition, mediates the 'bounce-back' of proteasome subunits by translocating into the nucleus and activating expression of genes encoding proteasome subunits. Also involved in regulating glucose flux. Together with CEBPB; represses expression of DSPP during odontoblast differentiation. In response to ascorbic acid induction, activates expression of SP7/Osterix in osteoblasts. Transcription factor that binds the antioxidant response elements (ARE) consensus sequence on promoters and activates their expression. In terms of biological role, transcription factor that binds the extended kappa 3 site of the TNF-alpha promoter after Fc gamma RIII stimulation and participates in the induction of this cytokine. This Mus musculus (Mouse) protein is Endoplasmic reticulum membrane sensor NFE2L1.